The chain runs to 643 residues: Phosphoenolpyruvate carboxykinase [GTP] (643 aa).

Residues Arg-102 and 253–255 (YGG) each bind substrate. Residues Lys-262 and His-282 each contribute to the Mn(2+) site. Ser-304 serves as a coordination point for substrate. GTP is bound at residue 305–310 (ACGKTN). Residue Cys-306 is part of the active site. Asp-329 is a binding site for Mn(2+). Residue 422–424 (NSR) coordinates substrate. GTP is bound by residues Arg-424, Arg-455, and 548–551 (YGDN).

This sequence belongs to the phosphoenolpyruvate carboxykinase [GTP] family. In terms of assembly, monomer. Requires Mn(2+) as cofactor.

It catalyses the reaction oxaloacetate + GTP = phosphoenolpyruvate + GDP + CO2. In parasitic nematodes PEPCK carboxylates phosphoenolpyruvate to oxaloacetate thus introducing the products of glycolysis to mitochondrial metabolism. Functionally, catalyzes the conversion of oxaloacetate (OAA) to phosphoenolpyruvate (PEP), the rate-limiting step in the metabolic pathway that produces glucose from lactate and other precursors derived from the citric acid cycle. This Ascaris suum (Pig roundworm) protein is Phosphoenolpyruvate carboxykinase [GTP] (PEPCK).